Here is a 148-residue protein sequence, read N- to C-terminus: uncharacterized protein (148 aa).

The [4Fe-4S] cluster site is built by Cys-21, Cys-24, Cys-88, and Cys-117.

It belongs to the complex I 20 kDa subunit family. The cofactor is [4Fe-4S] cluster.

This is an uncharacterized protein from Methanocaldococcus jannaschii (strain ATCC 43067 / DSM 2661 / JAL-1 / JCM 10045 / NBRC 100440) (Methanococcus jannaschii).